Consider the following 127-residue polypeptide: uncharacterized protein (127 aa).

2 helical membrane-spanning segments follow: residues Leu42 to Ile62 and Gly78 to Leu98.

It is found in the membrane. This is an uncharacterized protein from Schizosaccharomyces pombe (strain 972 / ATCC 24843) (Fission yeast).